A 250-amino-acid polypeptide reads, in one-letter code: 3-deoxy-manno-octulosonate cytidylyltransferase (250 aa).

The protein belongs to the KdsB family.

The protein localises to the cytoplasm. It carries out the reaction 3-deoxy-alpha-D-manno-oct-2-ulosonate + CTP = CMP-3-deoxy-beta-D-manno-octulosonate + diphosphate. The protein operates within nucleotide-sugar biosynthesis; CMP-3-deoxy-D-manno-octulosonate biosynthesis; CMP-3-deoxy-D-manno-octulosonate from 3-deoxy-D-manno-octulosonate and CTP: step 1/1. It functions in the pathway bacterial outer membrane biogenesis; lipopolysaccharide biosynthesis. Its function is as follows. Activates KDO (a required 8-carbon sugar) for incorporation into bacterial lipopolysaccharide in Gram-negative bacteria. The protein is 3-deoxy-manno-octulosonate cytidylyltransferase of Rhizobium meliloti (strain 1021) (Ensifer meliloti).